Reading from the N-terminus, the 283-residue chain is Adenylate kinase 2, chloroplastic (283 aa).

The transit peptide at 1–59 (MTGCVNSISPPPVTLYRHRASPSRSSFSLSGDALHSLYRHRRVSRSPSIIAPKFQIVAA) directs the protein to the chloroplast. 74–79 (ASGKGT) serves as a coordination point for ATP. The tract at residues 94–123 (SAGDLLRAEIASGSENGRRAKEHMEKGQLV) is NMP. Residues Arg-100, 121–123 (QLV), 150–153 (GYPR), and Gln-157 contribute to the AMP site. Positions 187–220 (GRRLDPVTGKIYHLKYSPPETEEIAVRLTQRFDD) are LID. Arg-188 serves as a coordination point for ATP. Positions 217 and 228 each coordinate AMP.

This sequence belongs to the adenylate kinase family. As to quaternary structure, monomer.

The protein localises to the plastid. The protein resides in the chloroplast stroma. The catalysed reaction is AMP + ATP = 2 ADP. Its function is as follows. Catalyzes the reversible transfer of the terminal phosphate group between ATP and AMP. Plays an important role in cellular energy homeostasis and in adenine nucleotide metabolism. Plays a major role in the equilibration of adenylates and de novo synthesis of ADP in the plastid stroma. In Arabidopsis thaliana (Mouse-ear cress), this protein is Adenylate kinase 2, chloroplastic.